The chain runs to 795 residues: Lon protease (795 aa).

Residues 17-214 (YPLMPLRDIV…KVYKFLQDEI (198 aa)) form the Lon N-terminal domain. 370 to 377 (GPPGVGKT) contributes to the ATP binding site. In terms of domain architecture, Lon proteolytic spans 605-787 (KPLVGVATGL…EEVFKIALVR (183 aa)). Active-site residues include S692 and K735.

Belongs to the peptidase S16 family. As to quaternary structure, homohexamer. Organized in a ring with a central cavity.

The protein resides in the cytoplasm. It carries out the reaction Hydrolysis of proteins in presence of ATP.. In terms of biological role, ATP-dependent serine protease that mediates the selective degradation of mutant and abnormal proteins as well as certain short-lived regulatory proteins. Required for cellular homeostasis and for survival from DNA damage and developmental changes induced by stress. Degrades polypeptides processively to yield small peptide fragments that are 5 to 10 amino acids long. Binds to DNA in a double-stranded, site-specific manner. In Aquifex aeolicus (strain VF5), this protein is Lon protease.